A 247-amino-acid polypeptide reads, in one-letter code: Cyclin-Q (247 aa).

The protein belongs to the cyclin family. Cyclin-like FAM58 subfamily.

Functionally, may be an activating cyclin for the cyclin-associated kinase CDK10. The polypeptide is Cyclin-Q (ccnq) (Danio rerio (Zebrafish)).